A 339-amino-acid polypeptide reads, in one-letter code: Holliday junction branch migration complex subunit RuvB (339 aa).

The large ATPase domain (RuvB-L) stretch occupies residues 1–181 (MEERLVSGYE…FGMVHRLEFY (181 aa)). ATP contacts are provided by residues leucine 20, arginine 21, glycine 62, lysine 65, threonine 66, threonine 67, 128-130 (EDF), arginine 171, tyrosine 181, and arginine 218. Threonine 66 provides a ligand contact to Mg(2+). Residues 182 to 252 (SVEELMLIIN…NAKAALDLLE (71 aa)) are small ATPAse domain (RuvB-S). The segment at 255–339 (ELGLDPTDRL…NKNAGELSLW (85 aa)) is head domain (RuvB-H). DNA-binding residues include arginine 310 and arginine 315.

The protein belongs to the RuvB family. In terms of assembly, homohexamer. Forms an RuvA(8)-RuvB(12)-Holliday junction (HJ) complex. HJ DNA is sandwiched between 2 RuvA tetramers; dsDNA enters through RuvA and exits via RuvB. An RuvB hexamer assembles on each DNA strand where it exits the tetramer. Each RuvB hexamer is contacted by two RuvA subunits (via domain III) on 2 adjacent RuvB subunits; this complex drives branch migration. In the full resolvosome a probable DNA-RuvA(4)-RuvB(12)-RuvC(2) complex forms which resolves the HJ.

The protein resides in the cytoplasm. The enzyme catalyses ATP + H2O = ADP + phosphate + H(+). The RuvA-RuvB-RuvC complex processes Holliday junction (HJ) DNA during genetic recombination and DNA repair, while the RuvA-RuvB complex plays an important role in the rescue of blocked DNA replication forks via replication fork reversal (RFR). RuvA specifically binds to HJ cruciform DNA, conferring on it an open structure. The RuvB hexamer acts as an ATP-dependent pump, pulling dsDNA into and through the RuvAB complex. RuvB forms 2 homohexamers on either side of HJ DNA bound by 1 or 2 RuvA tetramers; 4 subunits per hexamer contact DNA at a time. Coordinated motions by a converter formed by DNA-disengaged RuvB subunits stimulates ATP hydrolysis and nucleotide exchange. Immobilization of the converter enables RuvB to convert the ATP-contained energy into a lever motion, pulling 2 nucleotides of DNA out of the RuvA tetramer per ATP hydrolyzed, thus driving DNA branch migration. The RuvB motors rotate together with the DNA substrate, which together with the progressing nucleotide cycle form the mechanistic basis for DNA recombination by continuous HJ branch migration. Branch migration allows RuvC to scan DNA until it finds its consensus sequence, where it cleaves and resolves cruciform DNA. The polypeptide is Holliday junction branch migration complex subunit RuvB (Carboxydothermus hydrogenoformans (strain ATCC BAA-161 / DSM 6008 / Z-2901)).